The sequence spans 638 residues: Phosphomethylpyrimidine synthase (638 aa).

Substrate is bound by residues Asn243, Met272, Tyr301, His337, 357-359 (SRG), 398-401 (DGLR), and Glu437. His441 contributes to the Zn(2+) binding site. Tyr464 contributes to the substrate binding site. Residue His505 coordinates Zn(2+). Cys585, Cys588, and Cys593 together coordinate [4Fe-4S] cluster.

The protein belongs to the ThiC family. In terms of assembly, homodimer. [4Fe-4S] cluster serves as cofactor.

The enzyme catalyses 5-amino-1-(5-phospho-beta-D-ribosyl)imidazole + S-adenosyl-L-methionine = 4-amino-2-methyl-5-(phosphooxymethyl)pyrimidine + CO + 5'-deoxyadenosine + formate + L-methionine + 3 H(+). Its pathway is cofactor biosynthesis; thiamine diphosphate biosynthesis. In terms of biological role, catalyzes the synthesis of the hydroxymethylpyrimidine phosphate (HMP-P) moiety of thiamine from aminoimidazole ribotide (AIR) in a radical S-adenosyl-L-methionine (SAM)-dependent reaction. The sequence is that of Phosphomethylpyrimidine synthase from Azoarcus sp. (strain BH72).